The primary structure comprises 418 residues: Serine/threonine-protein kinase PCRK1 (418 aa).

Residues 36-63 form a disordered region; sequence GSEFNSRDVSGTSTESSMGRKNSYPPVS. Residues 84–369 form the Protein kinase domain; that stretch reads FSRSVMIGEG…EVLEMVNKIV (286 aa). ATP is bound by residues 90 to 98 and Lys-118; that span reads IGEGGFGCV. Catalysis depends on Asp-218, which acts as the Proton acceptor. Residues Ser-373, Ser-377, and Ser-385 each carry the phosphoserine modification.

The protein belongs to the protein kinase superfamily. Ser/Thr protein kinase family. In terms of assembly, interacts with FLS2.

The protein resides in the cell membrane. The catalysed reaction is L-seryl-[protein] + ATP = O-phospho-L-seryl-[protein] + ADP + H(+). It catalyses the reaction L-threonyl-[protein] + ATP = O-phospho-L-threonyl-[protein] + ADP + H(+). Functionally, involved in the activation of early immune responses. Plays a role in pattern-triggered immunity (PTI) induced by pathogen-associated molecular patterns (PAMPs) and damage-associated molecular patterns (DAMPs). Contributes to PTI in response to the bacterial pathogen Pseudomonas syringae pv maculicola strain ES4326. Contributes to PTI in response to the bacterial pathogen Pseudomonas syringae pv tomato strain DC3000. Functions redundantly with PCRK2 in basal resistance against bacterial pathogens and in regulation of plant immunity. Functions together with PCRK2 downstream of the PAMP receptor FLS2. Contributes to the induction of SARD1 and CBP60G, which are transcriptional activator of ICS1, an enzyme involved in salicylate (SA) biosynthesis upon pathogen attack. The sequence is that of Serine/threonine-protein kinase PCRK1 from Arabidopsis thaliana (Mouse-ear cress).